The following is a 180-amino-acid chain: ATP-dependent protease subunit HslV (180 aa).

Thr-6 is an active-site residue. The Na(+) site is built by Ala-164, Cys-167, and Thr-170.

It belongs to the peptidase T1B family. HslV subfamily. As to quaternary structure, a double ring-shaped homohexamer of HslV is capped on each side by a ring-shaped HslU homohexamer. The assembly of the HslU/HslV complex is dependent on binding of ATP.

It is found in the cytoplasm. The enzyme catalyses ATP-dependent cleavage of peptide bonds with broad specificity.. With respect to regulation, allosterically activated by HslU binding. Its function is as follows. Protease subunit of a proteasome-like degradation complex believed to be a general protein degrading machinery. The protein is ATP-dependent protease subunit HslV of Borrelia turicatae (strain 91E135).